Consider the following 442-residue polypeptide: tRNA modification GTPase MnmE (442 aa).

3 residues coordinate (6S)-5-formyl-5,6,7,8-tetrahydrofolate: Arg27, Glu84, and Lys124. One can recognise a TrmE-type G domain in the interval 221-366 (GLHVVIVGAP…LLDALQAFAE (146 aa)). Residues 231–236 (NAGKSS), 250–256 (SEEAGTT), and 275–278 (DTAG) contribute to the GTP site. Residues Ser235 and Thr256 each coordinate Mg(2+). Lys442 lines the (6S)-5-formyl-5,6,7,8-tetrahydrofolate pocket.

This sequence belongs to the TRAFAC class TrmE-Era-EngA-EngB-Septin-like GTPase superfamily. TrmE GTPase family. As to quaternary structure, homodimer. Heterotetramer of two MnmE and two MnmG subunits. It depends on K(+) as a cofactor.

Its subcellular location is the cytoplasm. Functionally, exhibits a very high intrinsic GTPase hydrolysis rate. Involved in the addition of a carboxymethylaminomethyl (cmnm) group at the wobble position (U34) of certain tRNAs, forming tRNA-cmnm(5)s(2)U34. The protein is tRNA modification GTPase MnmE of Brucella suis (strain ATCC 23445 / NCTC 10510).